The following is a 157-amino-acid chain: MQKIGIYPGTFDPVTNGHIDIIHRSSELFEKLIVAVAHSSAKNPMFSLKERLEMIQLATKSFKNVECIAFEGLLANLAKEYHCRVLVRGLRVVSDFEYELQMGYANKSLNHELETLYFMPTLQNAFISSSIVRSIIAHKGDASHLVPKEIYPFISKV.

Residue Thr-10 participates in substrate binding. ATP is bound by residues 10 to 11 and His-18; that span reads TF. Substrate-binding residues include Lys-42, Leu-74, and Arg-88. ATP contacts are provided by residues 89-91, Glu-99, and 124-130; these read GLR and NAFISSS.

Belongs to the bacterial CoaD family. Homohexamer. It depends on Mg(2+) as a cofactor.

It localises to the cytoplasm. The enzyme catalyses (R)-4'-phosphopantetheine + ATP + H(+) = 3'-dephospho-CoA + diphosphate. It participates in cofactor biosynthesis; coenzyme A biosynthesis; CoA from (R)-pantothenate: step 4/5. In terms of biological role, reversibly transfers an adenylyl group from ATP to 4'-phosphopantetheine, yielding dephospho-CoA (dPCoA) and pyrophosphate. The polypeptide is Phosphopantetheine adenylyltransferase (Helicobacter acinonychis (strain Sheeba)).